The following is a 445-amino-acid chain: TNF receptor-associated factor family protein DDB_G0290971 (445 aa).

The RING-type; degenerate zinc finger occupies 23–67 (CPICFDLYYSSSSKKEVFQCRDGHLACKSCWSDSLLNKKECMICR). 2 consecutive TRAF-type zinc fingers follow at residues 133–186 (KHQV…QLDA) and 186–242 (AHAL…ESID). Positions 269 to 307 (QLELVECKNQIYQINNKYEKLLERVIKLEQLSMDASNKL) form a coiled coil. The MATH domain maps to 314–441 (KNSIIFATFS…EDKLVIGLRI (128 aa)).

It belongs to the TNF receptor-associated factor family. A subfamily.

The protein localises to the cytoplasm. Probable adapter protein and signal transducer that links members of the tumor necrosis factor receptor family to different signaling pathways by association with the receptor cytoplasmic domain and kinases. The polypeptide is TNF receptor-associated factor family protein DDB_G0290971 (Dictyostelium discoideum (Social amoeba)).